A 442-amino-acid chain; its full sequence is Elongation factor 1-alpha 1 (442 aa).

The tr-type G domain occupies 5–227 (KEHLNLVVIG…AALDSFKIPK (223 aa)). The G1 stretch occupies residues 14–21 (GHVDSGKS). 14 to 21 (GHVDSGKS) lines the GTP pocket. The G2 stretch occupies residues 70–74 (GITID). The G3 stretch occupies residues 91-94 (DAPG). GTP is bound by residues 91–95 (DAPGH) and 153–156 (NKMD). Residues 153–156 (NKMD) are G4. Residues 194-196 (SGF) form a G5 region.

Belongs to the TRAFAC class translation factor GTPase superfamily. Classic translation factor GTPase family. EF-Tu/EF-1A subfamily.

It is found in the cytoplasm. In terms of biological role, this protein promotes the GTP-dependent binding of aminoacyl-tRNA to the A-site of ribosomes during protein biosynthesis. The protein is Elongation factor 1-alpha 1 (EFA1) of Euplotes crassus.